Here is a 61-residue protein sequence, read N- to C-terminus: Small ribosomal subunit protein uS14 (61 aa).

4 residues coordinate Zn(2+): Cys24, Cys27, Cys40, and Cys43.

Belongs to the universal ribosomal protein uS14 family. Zinc-binding uS14 subfamily. As to quaternary structure, part of the 30S ribosomal subunit. Contacts proteins S3 and S10. Zn(2+) is required as a cofactor.

Functionally, binds 16S rRNA, required for the assembly of 30S particles and may also be responsible for determining the conformation of the 16S rRNA at the A site. The chain is Small ribosomal subunit protein uS14 from Streptococcus equi subsp. zooepidemicus (strain H70).